A 563-amino-acid chain; its full sequence is Arginine--tRNA ligase (563 aa).

A 'HIGH' region motif is present at residues 122-132; sequence PNIAKPMSMGH.

Belongs to the class-I aminoacyl-tRNA synthetase family. As to quaternary structure, monomer.

The protein resides in the cytoplasm. The enzyme catalyses tRNA(Arg) + L-arginine + ATP = L-arginyl-tRNA(Arg) + AMP + diphosphate. In Levilactobacillus brevis (strain ATCC 367 / BCRC 12310 / CIP 105137 / JCM 1170 / LMG 11437 / NCIMB 947 / NCTC 947) (Lactobacillus brevis), this protein is Arginine--tRNA ligase.